The primary structure comprises 126 residues: Large-conductance mechanosensitive channel (126 aa).

A run of 2 helical transmembrane segments spans residues 14-34 (VIDL…VKSL) and 67-87 (GSFL…FILV).

It belongs to the MscL family. As to quaternary structure, homopentamer.

The protein localises to the cell membrane. Its function is as follows. Channel that opens in response to stretch forces in the membrane lipid bilayer. May participate in the regulation of osmotic pressure changes within the cell. The sequence is that of Large-conductance mechanosensitive channel from Lactiplantibacillus plantarum (strain ATCC BAA-793 / NCIMB 8826 / WCFS1) (Lactobacillus plantarum).